Consider the following 283-residue polypeptide: METFTSIDAMRAWCREKSRGGNTIGLVPTMGALHEGHLSLVHAAKKDCDHCVTSIFVNPTQFAANEDLDQYPRPIEDDLAMLRDAGVEAVFMPTADEMYPGGPQTHATSVHPSAVAFPLEGVHRPEHFVGVATVVMKLFQAAPSDRAFFGRKDLQQLCVIEHMVRDLNLPIEIVPCDIVREPDGLAMSSRNRYLSDDQRQRALCISKSLNQVEQAFLEGNHDPKQLESIMADHLSPCDSVDYAVVVDRQTLLPISEITQNAVALVAVRVGVTRLIDNRELIVA.

30-37 (MGALHEGH) provides a ligand contact to ATP. Residue His-37 is the Proton donor of the active site. Gln-61 serves as a coordination point for (R)-pantoate. Residue Gln-61 coordinates beta-alanine. ATP is bound at residue 150–153 (GRKD). Gln-156 lines the (R)-pantoate pocket. Residues Val-179 and 187-190 (MSSR) contribute to the ATP site.

The protein belongs to the pantothenate synthetase family. As to quaternary structure, homodimer.

The protein resides in the cytoplasm. The enzyme catalyses (R)-pantoate + beta-alanine + ATP = (R)-pantothenate + AMP + diphosphate + H(+). It participates in cofactor biosynthesis; (R)-pantothenate biosynthesis; (R)-pantothenate from (R)-pantoate and beta-alanine: step 1/1. Functionally, catalyzes the condensation of pantoate with beta-alanine in an ATP-dependent reaction via a pantoyl-adenylate intermediate. This is Pantothenate synthetase from Rhodopirellula baltica (strain DSM 10527 / NCIMB 13988 / SH1).